Reading from the N-terminus, the 253-residue chain is uncharacterized protein (253 aa).

The N-terminal stretch at 1 to 19 is a signal peptide; it reads MRYLKRITIYISLLILVSG. A lipid anchor (N-palmitoyl cysteine) is attached at Cys-20. Residue Cys-20 is the site of S-diacylglycerol cysteine attachment.

This sequence belongs to the staphylococcal tandem lipoprotein family.

It is found in the cell membrane. This is an uncharacterized protein from Staphylococcus epidermidis (strain ATCC 12228 / FDA PCI 1200).